The sequence spans 474 residues: Pleckstrin homology domain-containing family S member 1 (474 aa).

Positions 20–135 constitute a PH domain; sequence EVHKRDYFIK…WVSFMTPYCQ (116 aa). 3 disordered regions span residues 232–251, 272–321, and 449–474; these read IAGP…DQGF, STSA…DDQK, and RDLP…AAGE. A compositionally biased stretch (polar residues) spans 238-248; the sequence is SGDSIESNSPD. Over residues 449–458 the composition is skewed to basic and acidic residues; that stretch reads RDLPELERTP.

The chain is Pleckstrin homology domain-containing family S member 1 from Mus musculus (Mouse).